The chain runs to 218 residues: Attacin-B (218 aa).

The first 17 residues, 1-17, serve as a signal peptide directing secretion; the sequence is MQKTSILILALFAIAEA. A propeptide spanning residues 18 to 28 is cleaved from the precursor; that stretch reads VPTTGPIRVRR.

This sequence belongs to the attacin/sarcotoxin-2 family. Hemolymph (at protein level).

Its subcellular location is the secreted. In terms of biological role, hemolymph antibacterial protein. In Drosophila melanogaster (Fruit fly), this protein is Attacin-B (AttB).